Here is a 252-residue protein sequence, read N- to C-terminus: MDSKRDEKILELVKILKNTKYLVFFGGAGTSTDSGVKDFRGKDGLYKTLYKDKYRPEEVLSSDFFYSHRDIFMKYVEKELNIKGLKPNKGHMALVELEKIGILKAVITQNIDDLHQVSGNKNVLELHGSLKRWYCLSCGKTADRNFSCECGGVVRPDVTLYGENLNQSVVNEAIYQLEQADTLIVAGTSLTVYPAAYYLRYFRGKNLIIINDMDTQYDGEASLVIKDNFSYVMDRVVKELKKIQFGKTLKNI.

The Deacetylase sirtuin-type domain maps to 2–243 (DSKRDEKILE…DRVVKELKKI (242 aa)). A28, T32, F39, R40, Q109, I111, D112, and H127 together coordinate NAD(+). F39 lines the nicotinamide pocket. Nicotinamide is bound by residues I111 and D112. H127 functions as the Proton acceptor in the catalytic mechanism. Zn(2+) contacts are provided by C135, C138, C148, and C150. NAD(+) is bound by residues T188, S189, and N211.

It belongs to the sirtuin family. Class U subfamily. Zn(2+) serves as cofactor.

Its subcellular location is the cytoplasm. The enzyme catalyses N(6)-acetyl-L-lysyl-[protein] + NAD(+) + H2O = 2''-O-acetyl-ADP-D-ribose + nicotinamide + L-lysyl-[protein]. In terms of biological role, NAD-dependent protein deacetylase which modulates the activities of several enzymes which are inactive in their acetylated form. In Fusobacterium nucleatum subsp. nucleatum (strain ATCC 25586 / DSM 15643 / BCRC 10681 / CIP 101130 / JCM 8532 / KCTC 2640 / LMG 13131 / VPI 4355), this protein is NAD-dependent protein deacetylase.